We begin with the raw amino-acid sequence, 119 residues long: NADH-quinone oxidoreductase subunit A (119 aa).

The next 3 helical transmembrane spans lie at 7–27 (FPVL…MFLG), 63–83 (LIAI…PWGV), and 88–108 (IGWF…VGFV).

It belongs to the complex I subunit 3 family. In terms of assembly, NDH-1 is composed of 14 different subunits. Subunits NuoA, H, J, K, L, M, N constitute the membrane sector of the complex.

It is found in the cell membrane. The catalysed reaction is a quinone + NADH + 5 H(+)(in) = a quinol + NAD(+) + 4 H(+)(out). In terms of biological role, NDH-1 shuttles electrons from NADH, via FMN and iron-sulfur (Fe-S) centers, to quinones in the respiratory chain. The immediate electron acceptor for the enzyme in this species is believed to be ubiquinone. Couples the redox reaction to proton translocation (for every two electrons transferred, four hydrogen ions are translocated across the cytoplasmic membrane), and thus conserves the redox energy in a proton gradient. The sequence is that of NADH-quinone oxidoreductase subunit A from Polynucleobacter asymbioticus (strain DSM 18221 / CIP 109841 / QLW-P1DMWA-1) (Polynucleobacter necessarius subsp. asymbioticus).